A 594-amino-acid polypeptide reads, in one-letter code: Proteasome-associated ATPase (594 aa).

Polar residues predominate over residues Met1 to Ser10. The interval Met1–Glu23 is disordered. Residues Ala35–Gln86 are a coiled coil. ATP is bound at residue Gly282–Leu287. Residues Tyr593–Leu594 form a docks into pockets in the proteasome alpha-ring region.

Belongs to the AAA ATPase family. Homohexamer. Assembles into a hexameric ring structure that caps the 20S proteasome core. Strongly interacts with the prokaryotic ubiquitin-like protein Pup through a hydrophobic interface; the interacting region of ARC lies in its N-terminal coiled-coil domain. There is one Pup binding site per ARC hexamer ring. Upon ATP-binding, the C-terminus of ARC interacts with the alpha-rings of the proteasome core, possibly by binding to the intersubunit pockets.

It functions in the pathway protein degradation; proteasomal Pup-dependent pathway. ATPase which is responsible for recognizing, binding, unfolding and translocation of pupylated proteins into the bacterial 20S proteasome core particle. May be essential for opening the gate of the 20S proteasome via an interaction with its C-terminus, thereby allowing substrate entry and access to the site of proteolysis. Thus, the C-termini of the proteasomal ATPase may function like a 'key in a lock' to induce gate opening and therefore regulate proteolysis. This Arthrobacter sp. (strain FB24) protein is Proteasome-associated ATPase.